Reading from the N-terminus, the 345-residue chain is Protein RecA (345 aa).

65 to 72 (GPESSGKT) provides a ligand contact to ATP.

Belongs to the RecA family.

Its subcellular location is the cytoplasm. In terms of biological role, can catalyze the hydrolysis of ATP in the presence of single-stranded DNA, the ATP-dependent uptake of single-stranded DNA by duplex DNA, and the ATP-dependent hybridization of homologous single-stranded DNAs. It interacts with LexA causing its activation and leading to its autocatalytic cleavage. This is Protein RecA from Campylobacter fetus subsp. fetus (strain 82-40).